A 132-amino-acid chain; its full sequence is Histone H2B.1 (132 aa).

Residues 1 to 13 show a composition bias toward low complexity; that stretch reads MSAKASKAPASKA. Residues 1–39 form a disordered region; it reads MSAKASKAPASKAPAEKKPAAKKTSSSTDPSKKRTKARK. Lysine 7 is modified (N6-acetyllysine; alternate). A Glycyl lysine isopeptide (Lys-Gly) (interchain with G-Cter in SUMO); alternate cross-link involves residue lysine 7. Serine 11 carries the phosphoserine modification. Residue lysine 12 is modified to N6-acetyllysine. Lysine 17 carries the N6-acetyllysine; alternate modification. Lysine 17 is covalently cross-linked (Glycyl lysine isopeptide (Lys-Gly) (interchain with G-Cter in SUMO); alternate). Lysine 18 is covalently cross-linked (Glycyl lysine isopeptide (Lys-Gly) (interchain with G-Cter in SUMO)). Residue lysine 125 forms a Glycyl lysine isopeptide (Lys-Gly) (interchain with G-Cter in ubiquitin) linkage.

The protein belongs to the histone H2B family. As to quaternary structure, the nucleosome is a histone octamer containing two molecules each of H2A, H2B, H3 and H4 assembled in one H3-H4 heterotetramer and two H2A-H2B heterodimers. The octamer wraps approximately 147 bp of DNA. Monoubiquitinated by the UBC2-BRE1 complex to form H2BK123ub1. H2BK123ub1 gives a specific tag for epigenetic transcriptional activation and is also prerequisite for H3K4me and H3K79me formation. H2BK123ub1 also modulates the formation of double-strand breaks during meiosis and is a prerequisite for DNA-damage checkpoint activation. In terms of processing, phosphorylated by STE20 to form H2BS10ph during progression through meiotic prophase. May be correlated with chromosome condensation. Post-translationally, acetylated by GCN5 to form H2BK11ac and H2BK16ac. H2BK16ac can also be formed by ESA1. Acetylation of N-terminal lysines and particularly formation of H2BK11acK16ac has a positive effect on transcription. Sumoylation to form H2BK6su and probably also H2BK16su or H2BK17su, occurs preferentially near the telomeres and represses gene transcription.

Its subcellular location is the nucleus. The protein resides in the chromosome. Core component of nucleosome. Nucleosomes wrap and compact DNA into chromatin, limiting DNA accessibility to the cellular machineries which require DNA as a template. Histones thereby play a central role in transcription regulation, DNA repair, DNA replication and chromosomal stability. DNA accessibility is regulated via a complex set of post-translational modifications of histones, also called histone code, and nucleosome remodeling. In Kluyveromyces lactis (strain ATCC 8585 / CBS 2359 / DSM 70799 / NBRC 1267 / NRRL Y-1140 / WM37) (Yeast), this protein is Histone H2B.1 (HTB1).